The following is a 363-amino-acid chain: Peptide chain release factor 1 (363 aa).

The residue at position 237 (Gln237) is an N5-methylglutamine. Positions 284–296 (EDEKRRSAEESTR) are enriched in basic and acidic residues. The disordered stretch occupies residues 284–305 (EDEKRRSAEESTRRSLVASGDR).

Belongs to the prokaryotic/mitochondrial release factor family. In terms of processing, methylated by PrmC. Methylation increases the termination efficiency of RF1.

Its subcellular location is the cytoplasm. Functionally, peptide chain release factor 1 directs the termination of translation in response to the peptide chain termination codons UAG and UAA. This is Peptide chain release factor 1 from Shewanella sp. (strain MR-4).